The primary structure comprises 34 residues: MNDQMFVETLIITSSFFAIAVVLVLSVLLIERIG.

Residues 10 to 30 (LIITSSFFAIAVVLVLSVLLI) traverse the membrane as a helical segment.

Its subcellular location is the membrane. This is an uncharacterized protein from Shigella flexneri.